Consider the following 231-residue polypeptide: Ribonuclease HII (231 aa).

In terms of domain architecture, RNase H type-2 spans G23 to L214. A divalent metal cation contacts are provided by D29, E30, and D123.

It belongs to the RNase HII family. Mn(2+) is required as a cofactor. Mg(2+) serves as cofactor.

The protein resides in the cytoplasm. It carries out the reaction Endonucleolytic cleavage to 5'-phosphomonoester.. Its function is as follows. Endonuclease that specifically degrades the RNA of RNA-DNA hybrids. The sequence is that of Ribonuclease HII from Corynebacterium efficiens (strain DSM 44549 / YS-314 / AJ 12310 / JCM 11189 / NBRC 100395).